Here is a 386-residue protein sequence, read N- to C-terminus: Tryptophan--tRNA ligase (386 aa).

Positions 82–90 (PSGPMHIGH) match the 'HIGH' region motif. The 'KMSKS' region signature appears at 253–257 (KMSAS).

It belongs to the class-I aminoacyl-tRNA synthetase family.

It localises to the cytoplasm. The catalysed reaction is tRNA(Trp) + L-tryptophan + ATP = L-tryptophyl-tRNA(Trp) + AMP + diphosphate + H(+). This chain is Tryptophan--tRNA ligase, found in Pyrococcus horikoshii (strain ATCC 700860 / DSM 12428 / JCM 9974 / NBRC 100139 / OT-3).